A 494-amino-acid polypeptide reads, in one-letter code: UPF0371 protein SUB1165 (494 aa).

This sequence belongs to the UPF0371 family.

The chain is UPF0371 protein SUB1165 from Streptococcus uberis (strain ATCC BAA-854 / 0140J).